We begin with the raw amino-acid sequence, 267 residues long: Taurine import ATP-binding protein TauB (267 aa).

The region spanning 6–238 (FNEASLIYPA…DILAGAPASE (233 aa)) is the ABC transporter domain. 43 to 50 (GRSGSGKT) lines the ATP pocket.

Belongs to the ABC transporter superfamily. Taurine importer (TC 3.A.1.17.1) family. The complex is composed of two ATP-binding proteins (TauB), two transmembrane proteins (TauC) and a solute-binding protein (TauA).

The protein resides in the cell inner membrane. It carries out the reaction taurine(out) + ATP + H2O = taurine(in) + ADP + phosphate + H(+). Part of the ABC transporter complex TauABC involved in taurine import. Responsible for energy coupling to the transport system. In Sinorhizobium fredii (strain NBRC 101917 / NGR234), this protein is Taurine import ATP-binding protein TauB.